A 101-amino-acid chain; its full sequence is Putative septation protein SpoVG (101 aa).

The protein belongs to the SpoVG family.

Functionally, could be involved in septation. The sequence is that of Putative septation protein SpoVG from Staphylococcus saprophyticus subsp. saprophyticus (strain ATCC 15305 / DSM 20229 / NCIMB 8711 / NCTC 7292 / S-41).